Reading from the N-terminus, the 365-residue chain is A-type ATP synthase subunit C (365 aa).

Belongs to the V-ATPase V0D/AC39 subunit family. As to quaternary structure, has multiple subunits with at least A(3), B(3), C, D, E, F, H, I and proteolipid K(x).

It localises to the cell membrane. Component of the A-type ATP synthase that produces ATP from ADP in the presence of a proton gradient across the membrane. The chain is A-type ATP synthase subunit C from Thermococcus kodakarensis (strain ATCC BAA-918 / JCM 12380 / KOD1) (Pyrococcus kodakaraensis (strain KOD1)).